The chain runs to 621 residues: Transmembrane protein 200C (621 aa).

Residues 12–37 (ARKQDPLRPPSQIPKRKRKAKKRRKN) are disordered. Positions 25–36 (PKRKRKAKKRRK) are enriched in basic residues. Residues 53–73 (GLIALCGILVLLVGIAMAVVG) traverse the membrane as a helical segment. The tract at residues 80–147 (GTNREGGKQL…RAASPSSSST (68 aa)) is disordered. A compositionally biased stretch (low complexity) spans 125–147 (SSSAGAPRSTPPARAASPSSSST). The helical transmembrane segment at 167 to 187 (VFGPLIMGIGIFLFICANAVL) threads the bilayer. 3 disordered regions span residues 284 to 315 (WPPH…PREP), 347 to 368 (ASSC…QSTA), and 384 to 598 (LQGG…FTNK). Over residues 290–303 (APSGGRPRGAASPP) the composition is skewed to low complexity. Residues 405 to 418 (PGERGSQEIPRGEL) are compositionally biased toward basic and acidic residues. The segment covering 479–490 (RAPPSPEPPPSP) has biased composition (pro residues). Low complexity-rich tracts occupy residues 491-505 (GSAD…KAAS) and 523-533 (GSSQSDDPSSS). Polar residues predominate over residues 586–595 (EQPQPVQRQF).

This sequence belongs to the TMEM200 family.

Its subcellular location is the membrane. The protein is Transmembrane protein 200C (TMEM200C) of Homo sapiens (Human).